The chain runs to 359 residues: Peptide chain release factor 1 (359 aa).

The residue at position 233 (Q233) is an N5-methylglutamine.

Belongs to the prokaryotic/mitochondrial release factor family. Post-translationally, methylated by PrmC. Methylation increases the termination efficiency of RF1.

The protein resides in the cytoplasm. Functionally, peptide chain release factor 1 directs the termination of translation in response to the peptide chain termination codons UAG and UAA. The chain is Peptide chain release factor 1 from Orientia tsutsugamushi (strain Boryong) (Rickettsia tsutsugamushi).